We begin with the raw amino-acid sequence, 118 residues long: DNA-binding protein inhibitor ID-3 (118 aa).

The bHLH domain maps to 32–84 (SHKGPGVDEPMGLLYDMNGCYSKLKELVPGIPQGSKLSQVEILQHVIDYIFDL).

As to quaternary structure, homodimer. Heterodimer with other HLH proteins. Interacts (via HLH domain) with the bHLH protein hes4/hairy2 (via Orange domain). Interacts with stat3.

It is found in the nucleus. Its function is as follows. Transcriptional regulator (lacking a basic DNA binding domain) which negatively regulates the basic helix-loop-helix (bHLH) transcription factors by forming heterodimers and inhibiting their DNA binding and transcriptional activity. Influences cell fate decisions in the embryo by sequestering and blocking the activity of the bHLH transcription factors that control these decisions. Inhibits the binding of myogenic bHLH-containing complexes to E-box DNA, thereby preventing activation of muscle-specific target genes. Also inhibits the activity of neurogenic factor neurod1/neuroD. Plays a role in cell cycle progression and survival of neural crest progenitors; binding to either hes4-B/hairy2b or stat3 blocks the formation of transcription factor complexes and the repressor function of hes4-B/hairy2B, to allow neural crest progenitors to differentiate. May play a role in the regulation of the circadian rhythm. This chain is DNA-binding protein inhibitor ID-3 (id3), found in Xenopus tropicalis (Western clawed frog).